A 128-amino-acid polypeptide reads, in one-letter code: Saitohin (128 aa).

Polar residues predominate over residues 77-87 (SYSSEENSRNG). Positions 77–128 (SYSSEENSRNGAEQGRQLSIEGPFQGQNCPSHPAAALPLPMRGESQATSCQV) are disordered.

As to quaternary structure, interacts with PRDX6.

It localises to the cytoplasm. Its subcellular location is the nucleus. The sequence is that of Saitohin (STH) from Pan troglodytes (Chimpanzee).